We begin with the raw amino-acid sequence, 51 residues long: MSALKKSFIKRKLAKKQKQNRPMPQWVRMKTGNTMKYNAKRRHWRRTKLKL.

Positions 1–23 (MSALKKSFIKRKLAKKQKQNRPM) are disordered. Residues 7–19 (SFIKRKLAKKQKQ) show a composition bias toward basic residues.

Belongs to the eukaryotic ribosomal protein eL39 family. In terms of assembly, interacts with impact.

The polypeptide is Large ribosomal subunit protein eL39 (rpl-39) (Caenorhabditis elegans).